Reading from the N-terminus, the 375-residue chain is Transcription factor E2F4 (375 aa).

Residues 12–81 mediate DNA binding; that stretch reads SRHEKSLGLL…KNSIQWKGVG (70 aa). The leucine-zipper stretch occupies residues 39-61; the sequence is LKAAADTLAVRQKRRIYDITNVL. Positions 44-81 match the DEF box motif; the sequence is DTLAVRQKRRIYDITNVLEGIGLIEKKSKNSIQWKGVG. The segment at 82-177 is dimerization; that stretch reads PGCNTREIAD…NTNGQKKFQI (96 aa). The tract at residues 197–300 is disordered; that stretch reads SSAPVVVPVP…PDPSTSFQPI (104 aa). Positions 220–270 are enriched in polar residues; the sequence is STPQRPALTPQNDIATSPAPTVPHSTISNAESQDCPTGQTFSMENTTSSRL. Residues 280–296 show a composition bias toward low complexity; that stretch reads SSASLDNSNDSPDPSTS. Positions 299-375 are transactivation; the sequence is PIKSDLSDVL…CDLFDVPINL (77 aa).

It belongs to the E2F/DP family. As to quaternary structure, component of the drtf1/e2f transcription factor complex. Component of the EDM complex, at least composed of e2f4, e2f5, mcidas and tfdp1.

It localises to the nucleus. Transcription activator that binds DNA cooperatively with DP proteins through the E2 recognition site, 5'-TTTC[CG]CGC-3' found in the promoter region of a number of genes. Component of the EDM complex, a complex specifically required for multiciliate cell differentiation: the EDM complex binds and activate genes required for centriole biogenesis. Activates genes required for centriole assembly (plk4, cep152) and genes specifically required for motile cilia formation (foxj1). Also promotes the deuterosome pathway of centriole biogenesis by activating expression of deup1, but not its paralog cep63. The chain is Transcription factor E2F4 from Xenopus laevis (African clawed frog).